The primary structure comprises 294 residues: Probable 2-(5''-triphosphoribosyl)-3'-dephosphocoenzyme-A synthase (294 aa).

Belongs to the CitG/MdcB family.

It carries out the reaction 3'-dephospho-CoA + ATP = 2'-(5''-triphospho-alpha-D-ribosyl)-3'-dephospho-CoA + adenine. In Streptococcus pyogenes serotype M18 (strain MGAS8232), this protein is Probable 2-(5''-triphosphoribosyl)-3'-dephosphocoenzyme-A synthase.